Here is a 293-residue protein sequence, read N- to C-terminus: MEIKKGTWIIKKGFAEMFKGGVIMDVTSAEQAKIAEEAGAVAVMALERVPADIRKEGGVARMASIAKIREIMEAVSIPVMAKVRIGHIAEAKILEELGVDFIDESEVLTPADDRFHINKHEFKVPFVCGARDLGEALRRIAEGAAMIRTKGEAGTGNVVEAVKHMRRVMEQIKQVTKMEDEELVAYGKEIGAPVELLREVKRLGRLPVVNFAAGGVATPADAALMMMLGADGVFVGSGIFKSKDPRKMAKAMVLAVTYWDNPRILLKISEDIGEPMRGLDVEELEVRMQERGW.

Aspartate 25 is a binding site for D-ribose 5-phosphate. Lysine 82 serves as the catalytic Schiff-base intermediate with D-ribose 5-phosphate. Residue aspartate 103 coordinates D-ribulose 5-phosphate. Glycine 154 is a binding site for D-ribose 5-phosphate. Arginine 166 provides a ligand contact to D-glyceraldehyde 3-phosphate. D-ribose 5-phosphate is bound by residues glycine 215 and 236-237 (GS).

The protein belongs to the PdxS/SNZ family. In terms of assembly, homohexamer and homododecamer. In the presence of PdxT, forms a dodecamer of heterodimers.

The catalysed reaction is aldehydo-D-ribose 5-phosphate + D-glyceraldehyde 3-phosphate + L-glutamine = pyridoxal 5'-phosphate + L-glutamate + phosphate + 3 H2O + H(+). Its pathway is cofactor biosynthesis; pyridoxal 5'-phosphate biosynthesis. Functionally, catalyzes the formation of pyridoxal 5'-phosphate from ribose 5-phosphate (RBP), glyceraldehyde 3-phosphate (G3P) and ammonia. The ammonia is provided by the PdxT subunit. Can also use ribulose 5-phosphate and dihydroxyacetone phosphate as substrates, resulting from enzyme-catalyzed isomerization of RBP and G3P, respectively. This Thermotoga maritima (strain ATCC 43589 / DSM 3109 / JCM 10099 / NBRC 100826 / MSB8) protein is Pyridoxal 5'-phosphate synthase subunit PdxS.